The sequence spans 365 residues: Bifunctional chorismate mutase/prephenate dehydratase (365 aa).

The Chorismate mutase domain occupies 1 to 96 (MADQDQLKAL…SCLALEQPLK (96 aa)). Positions 11, 28, 39, and 57 each coordinate substrate. A Prephenate dehydratase domain is found at 97-272 (VAYLGPEGTF…NSTRFLIIGN (176 aa)). Residues 284–361 (SIIVSMRNKP…VALKVLGSYP (78 aa)) form the ACT domain.

The protein resides in the cytoplasm. The catalysed reaction is chorismate = prephenate. It carries out the reaction prephenate + H(+) = 3-phenylpyruvate + CO2 + H2O. Its pathway is amino-acid biosynthesis; L-phenylalanine biosynthesis; phenylpyruvate from prephenate: step 1/1. It functions in the pathway metabolic intermediate biosynthesis; prephenate biosynthesis; prephenate from chorismate: step 1/1. Functionally, catalyzes the Claisen rearrangement of chorismate to prephenate and the decarboxylation/dehydration of prephenate to phenylpyruvate. In Pseudomonas aeruginosa (strain ATCC 15692 / DSM 22644 / CIP 104116 / JCM 14847 / LMG 12228 / 1C / PRS 101 / PAO1), this protein is Bifunctional chorismate mutase/prephenate dehydratase (pheA).